Here is a 232-residue protein sequence, read N- to C-terminus: LexA repressor (232 aa).

Residues 1 to 10 are compositionally biased toward polar residues; that stretch reads MDDSNDSSSA. The interval 1 to 22 is disordered; sequence MDDSNDSSSAGPDGRLHAVDPS. Residues 47 to 67 constitute a DNA-binding region (H-T-H motif); it reads IREIGDAVGLTSTSSVAHQLR. Catalysis depends on for autocatalytic cleavage activity residues Ser156 and Lys193.

This sequence belongs to the peptidase S24 family. Homodimer.

It catalyses the reaction Hydrolysis of Ala-|-Gly bond in repressor LexA.. Functionally, represses a number of genes involved in the response to DNA damage (SOS response), including recA and lexA. In the presence of single-stranded DNA, RecA interacts with LexA causing an autocatalytic cleavage which disrupts the DNA-binding part of LexA, leading to derepression of the SOS regulon and eventually DNA repair. The protein is LexA repressor of Mycolicibacterium paratuberculosis (strain ATCC BAA-968 / K-10) (Mycobacterium paratuberculosis).